The primary structure comprises 494 residues: UPF0371 protein spr0309 (494 aa).

It belongs to the UPF0371 family.

The protein is UPF0371 protein spr0309 of Streptococcus pneumoniae (strain ATCC BAA-255 / R6).